The following is a 299-amino-acid chain: Oxygen-dependent coproporphyrinogen-III oxidase (299 aa).

A substrate-binding site is contributed by Ser-92. Positions 96 and 106 each coordinate Mn(2+). The active-site Proton donor is His-106. 108–110 (NVR) is a binding site for substrate. Mn(2+) contacts are provided by His-145 and His-175. An important for dimerization region spans residues 240 to 275 (YVEFNLVWDRGTLFGLQTGGRTESILMSMPPLVRWE). Substrate is bound at residue 258–260 (GGR).

Belongs to the aerobic coproporphyrinogen-III oxidase family. As to quaternary structure, homodimer. The cofactor is Mn(2+).

Its subcellular location is the cytoplasm. It catalyses the reaction coproporphyrinogen III + O2 + 2 H(+) = protoporphyrinogen IX + 2 CO2 + 2 H2O. It functions in the pathway porphyrin-containing compound metabolism; protoporphyrin-IX biosynthesis; protoporphyrinogen-IX from coproporphyrinogen-III (O2 route): step 1/1. Functionally, involved in the heme biosynthesis. Catalyzes the aerobic oxidative decarboxylation of propionate groups of rings A and B of coproporphyrinogen-III to yield the vinyl groups in protoporphyrinogen-IX. The sequence is that of Oxygen-dependent coproporphyrinogen-III oxidase from Escherichia coli O157:H7.